The sequence spans 197 residues: Na(+)-translocating NADH-quinone reductase subunit E (197 aa).

The next 6 membrane-spanning stretches (helical) occupy residues 11-31 (SVFI…FLAV), 35-55 (VSTA…SVPV), 76-96 (FLKF…LEMF), 108-128 (LGIY…VSFM), 139-159 (VVYG…LAGI), and 175-195 (LGIT…FSGI).

The protein belongs to the NqrDE/RnfAE family. As to quaternary structure, composed of six subunits; NqrA, NqrB, NqrC, NqrD, NqrE and NqrF.

The protein localises to the cell inner membrane. The catalysed reaction is a ubiquinone + n Na(+)(in) + NADH + H(+) = a ubiquinol + n Na(+)(out) + NAD(+). Functionally, NQR complex catalyzes the reduction of ubiquinone-1 to ubiquinol by two successive reactions, coupled with the transport of Na(+) ions from the cytoplasm to the periplasm. NqrA to NqrE are probably involved in the second step, the conversion of ubisemiquinone to ubiquinol. The protein is Na(+)-translocating NADH-quinone reductase subunit E of Neisseria meningitidis serogroup B (strain ATCC BAA-335 / MC58).